The chain runs to 266 residues: Dihydropteroate synthase (266 aa).

The Pterin-binding domain occupies 12–260 (AAIMGILNVT…DVKANQDIVA (249 aa)). Asn19 provides a ligand contact to Mg(2+). Residues Thr59, Asp93, Asn112, Asp176, Lys212, and 248-250 (RVH) each bind (7,8-dihydropterin-6-yl)methyl diphosphate.

Belongs to the DHPS family. As to quaternary structure, homodimer or homotrimer. It depends on Mg(2+) as a cofactor.

It carries out the reaction (7,8-dihydropterin-6-yl)methyl diphosphate + 4-aminobenzoate = 7,8-dihydropteroate + diphosphate. It functions in the pathway cofactor biosynthesis; tetrahydrofolate biosynthesis; 7,8-dihydrofolate from 2-amino-4-hydroxy-6-hydroxymethyl-7,8-dihydropteridine diphosphate and 4-aminobenzoate: step 1/2. Catalyzes the condensation of para-aminobenzoate (pABA) with 6-hydroxymethyl-7,8-dihydropterin diphosphate (DHPt-PP) to form 7,8-dihydropteroate (H2Pte), the immediate precursor of folate derivatives. This chain is Dihydropteroate synthase (folP), found in Streptococcus pyogenes serotype M1.